The chain runs to 700 residues: Polyphosphate kinase (700 aa).

Asparagine 45 is an ATP binding site. Mg(2+)-binding residues include arginine 373 and arginine 403. The PLD phosphodiesterase 1 domain maps to 428 to 462; that stretch reads PGMKIHAKLLLITRREEQGFVRYAHIGTGNFHERT. Histidine 433 serves as the catalytic Phosphohistidine intermediate. 3 residues coordinate ATP: tyrosine 466, arginine 562, and histidine 590. Positions 585–615 constitute a PLD phosphodiesterase 2 domain; that stretch reads DRFLEHPRVLVVHNDGDPQVFISSADWMERN.

The protein belongs to the polyphosphate kinase 1 (PPK1) family. Mg(2+) serves as cofactor. In terms of processing, an intermediate of this reaction is the autophosphorylated ppk in which a phosphate is covalently linked to a histidine residue through a N-P bond.

It carries out the reaction [phosphate](n) + ATP = [phosphate](n+1) + ADP. Functionally, catalyzes the reversible transfer of the terminal phosphate of ATP to form a long-chain polyphosphate (polyP). The chain is Polyphosphate kinase from Vibrio vulnificus (strain YJ016).